The chain runs to 148 residues: Ubiquitin-conjugating enzyme E2 29 (148 aa).

One can recognise a UBC core domain in the interval 1-147 (MATRRILKEL…ARSWTQKYAL (147 aa)). The Glycyl thioester intermediate role is filled by Cys-85.

It belongs to the ubiquitin-conjugating enzyme family.

It carries out the reaction S-ubiquitinyl-[E1 ubiquitin-activating enzyme]-L-cysteine + [E2 ubiquitin-conjugating enzyme]-L-cysteine = [E1 ubiquitin-activating enzyme]-L-cysteine + S-ubiquitinyl-[E2 ubiquitin-conjugating enzyme]-L-cysteine.. Its pathway is protein modification; protein ubiquitination. Its function is as follows. Accepts the ubiquitin from the E1 complex and catalyzes its covalent attachment to other proteins. The chain is Ubiquitin-conjugating enzyme E2 29 (UBC29) from Arabidopsis thaliana (Mouse-ear cress).